A 364-amino-acid chain; its full sequence is Chorismate synthase (364 aa).

The NADP(+) site is built by Arg48 and Arg54. FMN contacts are provided by residues 130-132, 242-243, Gly287, 302-306, and Arg328; these read RSS, NA, and KPTSS.

It belongs to the chorismate synthase family. In terms of assembly, homotetramer. FMNH2 is required as a cofactor.

It catalyses the reaction 5-O-(1-carboxyvinyl)-3-phosphoshikimate = chorismate + phosphate. It functions in the pathway metabolic intermediate biosynthesis; chorismate biosynthesis; chorismate from D-erythrose 4-phosphate and phosphoenolpyruvate: step 7/7. Functionally, catalyzes the anti-1,4-elimination of the C-3 phosphate and the C-6 proR hydrogen from 5-enolpyruvylshikimate-3-phosphate (EPSP) to yield chorismate, which is the branch point compound that serves as the starting substrate for the three terminal pathways of aromatic amino acid biosynthesis. This reaction introduces a second double bond into the aromatic ring system. The sequence is that of Chorismate synthase from Allorhizobium ampelinum (strain ATCC BAA-846 / DSM 112012 / S4) (Agrobacterium vitis (strain S4)).